A 716-amino-acid polypeptide reads, in one-letter code: Macrophage-expressed gene 1 protein (716 aa).

Residues 1–20 form the signal peptide; it reads MNNFRATILFWAVAAWVTSG. Residues 30–345 enclose the MACPF domain; that stretch reads GVQKCKNALK…TAVKRYYTFN (316 aa). Cys-34 and Cys-70 are joined by a disulfide. 2 consecutive transmembrane segments (beta stranded) span residues 113–120 and 127–132; these read YSINTELS and GKFSTE. N-linked (GlcNAc...) asparagine glycans are attached at residues Asn-168 and Asn-185. 2 beta stranded membrane-spanning segments follow: residues 235–244 and 248–256; these read AVTASAGLAF and VNFKFEENY. An N-linked (GlcNAc...) asparagine glycan is attached at Asn-269. A disulfide bond links Cys-350 and Cys-369. A glycan (N-linked (GlcNAc...) asparagine) is linked at Asn-375. 5 cysteine pairs are disulfide-bonded: Cys-385–Cys-397, Cys-435–Cys-449, Cys-439–Cys-445, Cys-534–Cys-572, and Cys-557–Cys-577. Positions 413 to 656 are P2; that stretch reads PSGYSPVRLL…GDGGGLSGGA (244 aa). The helical transmembrane segment at 656–676 threads the bilayer; the sequence is AAAGVTLGVTTILAVVITLAI. A disordered region spans residues 693 to 716; sequence RQSLVPGTAATGDTTYQEQGQSPA. Positions 703-716 are enriched in polar residues; that stretch reads TGDTTYQEQGQSPA.

It belongs to the MPEG1 family. Homooligomer; predominantly forms a homooligomeric arc-shaped pore complex instead of complete rings of 16 subunits. Post-translationally, proteolytically processed in two steps to generate the Macrophage-expressed gene 1 protein, processed form: cleaved by trypsin in proximity of the helical transmembrane domain releases the ectodomain into the lysosomal lumen to orient the pore-forming domain toward the endogenous membranes, and processed by the asparagine endopeptidase (LGMN). Proteolytic processing in antigen-containing vesicles is pH-dependent. Monoubiquitinated in response to bacterial infection; ubiquitination is required for vesicular localization and antibacterial activity and can be blocked by bacterial cell cycle inhibiting factor (cif).

Its subcellular location is the cytoplasmic vesicle membrane. The protein localises to the cytoplasmic vesicle. It localises to the phagosome membrane. With respect to regulation, forms arc- and ring-shaped pre-pores on top of the membrane at neutral to slightly acidic pH conditions and converts to pores upon acidification. Undergoes transition from the pre-pore to the pore in a processive clockwise hand-over-hand process. In the pore state, 2 alpha-helical regions refold into transmembrane hairpins (TMH1 and TMH2) in each protomer that form in the ensemble complex giant beta-barrel transmembrane pores. Its function is as follows. Pore-forming protein involved in both innate and adaptive immunity. Plays a central role in antigen cross-presentation in dendritic cells by forming a pore in antigen-containing compartments, thereby promoting delivery of antigens for cross-presentation. Also involved in innate immune response following bacterial infection; shows antibacterial activity against a wide spectrum of Gram-positive, Gram-negative and acid-fast bacteria. Reduces the viability of the intracytosolic pathogen L.monocytogenes by inhibiting acidification of the phagocytic vacuole of host cells which restricts bacterial translocation from the vacuole to the cytosol. Required for the antibacterial activity of reactive oxygen species and nitric oxide. Pore-forming protein that plays a central role in antigen cross-presentation in dendritic cells by mediating delivery of antigens for cross-presentation. Dendritic cells bridge innate and adaptive immunity by capturing exogenous antigens on MHC class-I molecules and presenting them to naive CD8(+) T-cells. Acts by forming a pore in antigen-containing compartments, promoting the release of antigens into the cytosol, enabling generation of MHCI:peptide complexes and T-cell priming. This chain is Macrophage-expressed gene 1 protein (MPEG1), found in Pongo abelii (Sumatran orangutan).